The sequence spans 612 residues: Phosphomethylpyrimidine synthase (612 aa).

2 disordered regions span residues 1 to 33 (MTIKDARTPASTQNTAQADTAENTDTAEDTEAG) and 105 to 146 (AGRP…RDGN). Residues 12–24 (TQNTAQADTAENT) are compositionally biased toward low complexity. Positions 105 to 117 (AGRPVRPEDDGIK) are enriched in basic and acidic residues. Substrate contacts are provided by residues asparagine 213, methionine 242, tyrosine 271, histidine 307, 327–329 (SRG), 368–371 (DGLR), and glutamate 407. Histidine 411 serves as a coordination point for Zn(2+). Residue tyrosine 434 coordinates substrate. Histidine 475 is a Zn(2+) binding site. [4Fe-4S] cluster-binding residues include cysteine 555, cysteine 558, and cysteine 563.

The protein belongs to the ThiC family. [4Fe-4S] cluster serves as cofactor.

It carries out the reaction 5-amino-1-(5-phospho-beta-D-ribosyl)imidazole + S-adenosyl-L-methionine = 4-amino-2-methyl-5-(phosphooxymethyl)pyrimidine + CO + 5'-deoxyadenosine + formate + L-methionine + 3 H(+). The protein operates within cofactor biosynthesis; thiamine diphosphate biosynthesis. In terms of biological role, catalyzes the synthesis of the hydroxymethylpyrimidine phosphate (HMP-P) moiety of thiamine from aminoimidazole ribotide (AIR) in a radical S-adenosyl-L-methionine (SAM)-dependent reaction. The sequence is that of Phosphomethylpyrimidine synthase from Streptomyces coelicolor (strain ATCC BAA-471 / A3(2) / M145).